Here is a 285-residue protein sequence, read N- to C-terminus: Polyamine aminopropyltransferase (285 aa).

The PABS domain maps to 5 to 241 (DTWFTEHFQA…GWWSVTLSSK (237 aa)). Q35 lines the S-methyl-5'-thioadenosine pocket. Residues H66 and D90 each coordinate spermidine. S-methyl-5'-thioadenosine is bound by residues D110 and 141-142 (DG). The Proton acceptor role is filled by D160. 160–163 (DSTD) lines the spermidine pocket. Position 167 (P167) interacts with S-methyl-5'-thioadenosine.

Belongs to the spermidine/spermine synthase family. In terms of assembly, homodimer or homotetramer.

The protein resides in the cytoplasm. The catalysed reaction is S-adenosyl 3-(methylsulfanyl)propylamine + putrescine = S-methyl-5'-thioadenosine + spermidine + H(+). It functions in the pathway amine and polyamine biosynthesis; spermidine biosynthesis; spermidine from putrescine: step 1/1. Functionally, catalyzes the irreversible transfer of a propylamine group from the amino donor S-adenosylmethioninamine (decarboxy-AdoMet) to putrescine (1,4-diaminobutane) to yield spermidine. This is Polyamine aminopropyltransferase from Xylella fastidiosa (strain M12).